The following is a 386-amino-acid chain: Ethanolamine kinase 2 (386 aa).

The protein belongs to the choline/ethanolamine kinase family. In terms of tissue distribution, expressed in kidney, liver, ovary, testis and prostate.

It catalyses the reaction ethanolamine + ATP = phosphoethanolamine + ADP + H(+). It participates in phospholipid metabolism; phosphatidylethanolamine biosynthesis; phosphatidylethanolamine from ethanolamine: step 1/3. In terms of biological role, highly specific for ethanolamine phosphorylation. Does not have choline kinase activity. The protein is Ethanolamine kinase 2 (ETNK2) of Homo sapiens (Human).